A 356-amino-acid polypeptide reads, in one-letter code: MMIGETRRTYPTVEIPPWPVLEELTTSEFFSPVMNSPDCSMLEALAGLQRYLPSNEPDPESYPDLLGPDSPIDAYSCDHFRMYDFKVRRCARGRSHDWTECPYAHPGEKARRRDPRKYHYSGTACPDFRKGGCKKGDSCEFAHGVFECWLHPARYRTQPCKDGGNCLRKICFFAHSPDQLRFLHTRSPDRVDSFDVSSPIRARAFQLSISPVSGSPPMSPRADSESSPMTQSLSRSLGSCSINDVVPSFRNLQFNSVKSFPRNNPLFGFGSPRGSILGPGFQSLPTTPTRPGNLDIWEYGLEEEPVMERVVESGRELREKMREKLHKENCMDRVAQDPDQNLGEAPDVGWVSDLLM.

2 consecutive C3H1-type zinc fingers follow at residues 120–146 (YSGT…HGVF) and 155–177 (YRTQ…AHSP). Positions 209-235 (ISPVSGSPPMSPRADSESSPMTQSLSR) are disordered. The segment covering 225-235 (ESSPMTQSLSR) has biased composition (polar residues).

The polypeptide is Zinc finger CCCH domain-containing protein 49 (Arabidopsis thaliana (Mouse-ear cress)).